Here is a 617-residue protein sequence, read N- to C-terminus: tRNA uridine 5-carboxymethylaminomethyl modification enzyme MnmG (617 aa).

Residues 9 to 14 (GAGHAG), V120, and T175 each bind FAD. 267-281 (GPRYCPSIEDKVVRF) contributes to the NAD(+) binding site. An FAD-binding site is contributed by Q364.

Belongs to the MnmG family. Homodimer. Heterotetramer of two MnmE and two MnmG subunits. Requires FAD as cofactor.

Its subcellular location is the cytoplasm. In terms of biological role, NAD-binding protein involved in the addition of a carboxymethylaminomethyl (cmnm) group at the wobble position (U34) of certain tRNAs, forming tRNA-cmnm(5)s(2)U34. The protein is tRNA uridine 5-carboxymethylaminomethyl modification enzyme MnmG of Onion yellows phytoplasma (strain OY-M).